The chain runs to 482 residues: tRNA sulfurtransferase (482 aa).

Residues 61 to 165 form the THUMP domain; sequence LTIRDALTRI…DDRLLLIKGR (105 aa). ATP contacts are provided by residues 183 to 184, lysine 265, glycine 287, and glutamine 296; that span reads LI. A disulfide bond links cysteine 344 and cysteine 456. The Rhodanese domain occupies 404–482; that stretch reads FGPNDVILDI…GFKNVKVYRP (79 aa). The active-site Cysteine persulfide intermediate is cysteine 456.

The protein belongs to the ThiI family. Interacts with IscS.

The protein localises to the cytoplasm. The catalysed reaction is [ThiI sulfur-carrier protein]-S-sulfanyl-L-cysteine + a uridine in tRNA + 2 reduced [2Fe-2S]-[ferredoxin] + ATP + H(+) = [ThiI sulfur-carrier protein]-L-cysteine + a 4-thiouridine in tRNA + 2 oxidized [2Fe-2S]-[ferredoxin] + AMP + diphosphate. The enzyme catalyses [ThiS sulfur-carrier protein]-C-terminal Gly-Gly-AMP + S-sulfanyl-L-cysteinyl-[cysteine desulfurase] + AH2 = [ThiS sulfur-carrier protein]-C-terminal-Gly-aminoethanethioate + L-cysteinyl-[cysteine desulfurase] + A + AMP + 2 H(+). It functions in the pathway cofactor biosynthesis; thiamine diphosphate biosynthesis. Catalyzes the ATP-dependent transfer of a sulfur to tRNA to produce 4-thiouridine in position 8 of tRNAs, which functions as a near-UV photosensor. Also catalyzes the transfer of sulfur to the sulfur carrier protein ThiS, forming ThiS-thiocarboxylate. This is a step in the synthesis of thiazole, in the thiamine biosynthesis pathway. The sulfur is donated as persulfide by IscS. The sequence is that of tRNA sulfurtransferase from Escherichia coli O157:H7.